A 104-amino-acid polypeptide reads, in one-letter code: Large ribosomal subunit protein bL21 (104 aa).

Belongs to the bacterial ribosomal protein bL21 family. In terms of assembly, part of the 50S ribosomal subunit. Contacts protein L20.

Functionally, this protein binds to 23S rRNA in the presence of protein L20. This Alkalilimnicola ehrlichii (strain ATCC BAA-1101 / DSM 17681 / MLHE-1) protein is Large ribosomal subunit protein bL21.